Consider the following 956-residue polypeptide: Lon protease homolog, mitochondrial 1 (956 aa).

Disordered stretches follow at residues 37–57 (NNNN…NNNN) and 83–123 (KKKG…GNEK). The segment covering 91 to 123 (NNDDNDNEKNEKNEKKVKNEKKEKNEKNDGNEK) has biased composition (basic and acidic residues). In terms of domain architecture, Lon N-terminal spans 159 to 357 (VVIYPSNSVN…MLYHMILNEQ (199 aa)). 511–518 (GPPGTGKT) contributes to the ATP binding site. Positions 747–945 (VTPIGVVNGL…KDVFEVAFPN (199 aa)) constitute a Lon proteolytic domain. Low complexity predominate over residues 777 to 795 (KPLSSLPPSQQQQNQLEPS). Residues 777-800 (KPLSSLPPSQQQQNQLEPSIKTTG) are disordered. Residues serine 851 and lysine 894 contribute to the active site.

This sequence belongs to the peptidase S16 family. As to quaternary structure, homohexamer or homoheptamer. Organized in a ring with a central cavity.

Its subcellular location is the mitochondrion matrix. It catalyses the reaction Hydrolysis of proteins in presence of ATP.. ATP-dependent serine protease that mediates the selective degradation of misfolded, unassembled or oxidatively damaged polypeptides as well as certain short-lived regulatory proteins in the mitochondrial matrix. May also have a chaperone function in the assembly of inner membrane protein complexes. Participates in the regulation of mitochondrial gene expression and in the maintenance of the integrity of the mitochondrial genome. Binds to mitochondrial DNA in a site-specific manner. The polypeptide is Lon protease homolog, mitochondrial 1 (Dictyostelium discoideum (Social amoeba)).